The primary structure comprises 497 residues: Solute carrier family 2, facilitated glucose transporter member 6 (497 aa).

Topologically, residues 1–36 (MQEPLLRTEGLDYDTFPEVPATPGERERAGALKNRR) are cytoplasmic. Positions 5–6 (LL) match the Dileucine internalization motif motif. Residues 37-57 (VFLATFAAVLGNFSFGYALVY) traverse the membrane as a helical segment. Over 58–80 (TSPVIPELKLSSDPALHLDKIQA) the chain is Extracellular. The chain crosses the membrane as a helical span at residues 81–101 (SWFGSVFTLGAAAGGLSAMLL). At 102–115 (NDLLGRKLSIMFSA) the chain is on the cytoplasmic side. A helical transmembrane segment spans residues 116–136 (VPSAIGYAIMAGARGLWMLLL). Residues 137-138 (GR) are Extracellular-facing. A helical transmembrane segment spans residues 139–159 (MLTGFAGGLTAACIPVYVSEI). At 160–171 (APPDVRGALGAT) the chain is on the cytoplasmic side. Residues 172–192 (PQLMAVFGSLSLYALGLLLPW) traverse the membrane as a helical segment. Gln173 provides a ligand contact to a D-hexose. Position 193 (Arg193) is a topological domain, extracellular. Residues 194 to 214 (WLAVAGEGPVLIMILLLSFMP) form a helical membrane-spanning segment. Topologically, residues 215–273 (NSPRFLLSKSRDEEALQALTWLRADSEVHWEFEQIQDNVRRQSSRVSWAEAREPRVYRP) are cytoplasmic. Residues 274 to 294 (VLIAVLMRFLQQLTGITPILV) traverse the membrane as a helical segment. Residue 284 to 285 (QQ) participates in a D-hexose binding. Over 295–312 (YLQTIFDNTSVVLPSQQD) the chain is Extracellular. The N-linked (GlcNAc...) asparagine glycan is linked to Asn302. The chain crosses the membrane as a helical span at residues 313 to 333 (AAIVGAVRLLSVLIAAVTMDL). Topologically, residues 334–337 (AGRK) are cytoplasmic. Residues 338–358 (VLLYVSASVMFAANLTLGLYV) form a helical membrane-spanning segment. The Extracellular portion of the chain corresponds to 359-385 (QFVPRPLTPNSTVEIVTLGDTAFNYLT). An N-linked (GlcNAc...) asparagine glycan is attached at Asn368. Residues 386–406 (LIPLLATMLFIMGYAMGWGPI) traverse the membrane as a helical segment. Topologically, residues 407–425 (TWLLMSEVLPLRARGVASG) are cytoplasmic. An a D-hexose-binding site is contributed by Trp408. The helical transmembrane segment at 426-446 (LCVLVSWLTAFVLTNYFLLAV) threads the bilayer. Residue Asn447 is a topological domain, extracellular. A helical transmembrane segment spans residues 448–468 (AFGLQVPFFFFSAICLLSLLF). Topologically, residues 469 to 497 (TGCCVPETRGRSLEQIEAFFHTRRMSFRP) are cytoplasmic.

Belongs to the major facilitator superfamily. Sugar transporter (TC 2.A.1.1) family. As to expression, mainly expressed in brain and spleen. Also expressed in lung, heart, muscle, liver, kidney, fat, whole blood, testes, ovaries and uterus.

The protein localises to the lysosome membrane. Its function is as follows. Probable sugar transporter that acts as a regulator of glycolysis in macrophages. Does not transport glucose. This is Solute carrier family 2, facilitated glucose transporter member 6 from Mus musculus (Mouse).